A 480-amino-acid polypeptide reads, in one-letter code: Histone deacetylase 1 (480 aa).

The interval 9–321 (RKVCYYYDGD…WTYETAVALD (313 aa)) is histone deacetylase. Residues glycine 27 and lysine 31 each contribute to the 1D-myo-inositol 1,4,5,6-tetrakisphosphate site. Histidine 141 is an active-site residue. Zn(2+)-binding residues include aspartate 176, histidine 178, and aspartate 264. Residue arginine 270 coordinates 1D-myo-inositol 1,4,5,6-tetrakisphosphate. The segment at 376-480 (APGVQMQPIP…KGVKEETKST (105 aa)) is disordered. Positions 388–400 (AVQEDSGDEEEED) are enriched in acidic residues. Residues 401–416 (PEKRISIRNSDKRISC) are compositionally biased toward basic and acidic residues. Residues 417-427 (DEEFSDSEDEG) show a composition bias toward acidic residues. Residues 455-480 (KDEKEEEKAKEEKAEPKGVKEETKST) are compositionally biased toward basic and acidic residues.

It belongs to the histone deacetylase family. HD type 1 subfamily. The cofactor is Zn(2+).

Its subcellular location is the nucleus. It carries out the reaction N(6)-acetyl-L-lysyl-[histone] + H2O = L-lysyl-[histone] + acetate. The catalysed reaction is N(6)-acetyl-L-lysyl-[protein] + H2O = L-lysyl-[protein] + acetate. It catalyses the reaction N(6)-(2E)-butenoyl-L-lysyl-[protein] + H2O = (2E)-2-butenoate + L-lysyl-[protein]. The enzyme catalyses N(6)-[(S)-lactoyl]-L-lysyl-[protein] + H2O = (S)-lactate + L-lysyl-[protein]. With respect to regulation, inositol tetraphosphate (1D-myo-inositol 1,4,5,6-tetrakisphosphate) may act as an intermolecular glue between HDAC1 and N-Cor repressor complex components. Histone deacetylase that catalyzes the deacetylation of lysine residues on the N-terminal part of the core histones (H2A, H2B, H3 and H4). Histone deacetylation gives a tag for epigenetic repression and plays an important role in transcriptional regulation, cell cycle progression and developmental events. Histone deacetylases act via the formation of large multiprotein complexes. Also functions as a deacetylase for non-histone proteins. In addition to protein deacetylase activity, also has protein-lysine deacylase activity: acts as a protein decrotonylase and delactylase by mediating decrotonylation ((2E)-butenoyl) and delactylation (lactoyl) of histones, respectively. The chain is Histone deacetylase 1 (HDAC1) from Gallus gallus (Chicken).